The chain runs to 243 residues: HTH-type transcriptional repressor NagR (243 aa).

The HTH gntR-type domain occupies 9-77 (IPIYYQIMEQ…KGRGTFVSKP (69 aa)). Residues 37–56 (EREYAEQFGISRMTVRQALS) constitute a DNA-binding region (H-T-H motif). Alpha-D-glucosamine 6-phosphate is bound by residues 89–90 (FT), 133–135 (RVR), Glu-145, 165–167 (SIY), Glu-222, and Tyr-228. N-acetyl-D-glucosamine 6-phosphate is bound by residues 89-90 (FT), 133-135 (RVR), Glu-145, 165-167 (SIY), Glu-222, and Tyr-228.

As to quaternary structure, homodimer. Forms dimers via the C-terminal effector-binding domain. At high concentrations, probably forms polymers along the DNA.

With respect to regulation, binding to DNA is allosterically inhibited by an effector molecule. Binding of the effector to the C-terminal domain leads to a conformational change that modulates binding to DNA and thereby regulates transcription of the target genes. Glucosamine-6-phosphate (GlcN6P) and/or N-acetylglucosamine-6-phosphate (GlcNAc6P) are putative effectors of NagR. Binding of GlcNAc6P may prevent the protein-protein interactions responsible for polymerization along the DNA, but not the specific DNA binding. Its function is as follows. Main transcriptional repressor of genes involved in N-acetylglucosamine (GlcNAc) transport and utilization. Represses the expression of the nagAB and nagP operons by binding directly within their upstream regions. Binds to the DNA consensus sequence 5'-ATTGGTATAGACAACT-3'. Also acts as a weak repressor of mapB expression. This is HTH-type transcriptional repressor NagR from Bacillus subtilis (strain 168).